A 41-amino-acid polypeptide reads, in one-letter code: Large ribosomal subunit protein bL36 (41 aa).

It belongs to the bacterial ribosomal protein bL36 family.

This chain is Large ribosomal subunit protein bL36, found in Rhodopseudomonas palustris (strain BisB18).